Reading from the N-terminus, the 730-residue chain is Polyribonucleotide nucleotidyltransferase (730 aa).

Residues Asp494 and Asp500 each contribute to the Mg(2+) site. Positions 561 to 622 (PRIQTIQIDP…EAMNRAIQEI (62 aa)) constitute a KH domain. In terms of domain architecture, S1 motif spans 642 to 711 (GKIYTGRVTG…RSGKVRLSRK (70 aa)).

Belongs to the polyribonucleotide nucleotidyltransferase family. The cofactor is Mg(2+).

It is found in the cytoplasm. The catalysed reaction is RNA(n+1) + phosphate = RNA(n) + a ribonucleoside 5'-diphosphate. In terms of biological role, involved in mRNA degradation. Catalyzes the phosphorolysis of single-stranded polyribonucleotides processively in the 3'- to 5'-direction. This Opitutus terrae (strain DSM 11246 / JCM 15787 / PB90-1) protein is Polyribonucleotide nucleotidyltransferase.